Here is a 302-residue protein sequence, read N- to C-terminus: Myb-related protein Hv33 (302 aa).

2 consecutive HTH myb-type domains span residues 11–63 (QPKV…INYL) and 64–118 (RPDL…KKKL). 2 DNA-binding regions (H-T-H motif) span residues 39–63 (WSSVPRLAALNRCGKSCRLRWINYL) and 91–114 (WSQIASHLPGRTDNEIKNFWNSCI). Residues 137 to 158 (ATAAAALPDAEEEDRKPLCPAV) form a disordered region.

In terms of tissue distribution, germinating seed and apical meristem of shoot and root.

It localises to the nucleus. Functionally, possible transcription activator in response to an external signal. May be involved in the regulation of flavonoid biosynthesis. The polypeptide is Myb-related protein Hv33 (MYB2) (Hordeum vulgare (Barley)).